A 387-amino-acid chain; its full sequence is Succinate--CoA ligase [ADP-forming] subunit beta (387 aa).

The region spanning 9 to 244 (KQLFASYGLP…VSQEDDRENR (236 aa)) is the ATP-grasp domain. Residues lysine 46, 53 to 55 (GRG), glutamate 99, cysteine 102, and glutamate 107 each bind ATP. Mg(2+)-binding residues include asparagine 199 and aspartate 213. Substrate contacts are provided by residues asparagine 264 and 321–323 (GIV).

Belongs to the succinate/malate CoA ligase beta subunit family. In terms of assembly, heterotetramer of two alpha and two beta subunits. Mg(2+) is required as a cofactor.

The enzyme catalyses succinate + ATP + CoA = succinyl-CoA + ADP + phosphate. It catalyses the reaction GTP + succinate + CoA = succinyl-CoA + GDP + phosphate. It functions in the pathway carbohydrate metabolism; tricarboxylic acid cycle; succinate from succinyl-CoA (ligase route): step 1/1. In terms of biological role, succinyl-CoA synthetase functions in the citric acid cycle (TCA), coupling the hydrolysis of succinyl-CoA to the synthesis of either ATP or GTP and thus represents the only step of substrate-level phosphorylation in the TCA. The beta subunit provides nucleotide specificity of the enzyme and binds the substrate succinate, while the binding sites for coenzyme A and phosphate are found in the alpha subunit. This chain is Succinate--CoA ligase [ADP-forming] subunit beta, found in Legionella pneumophila (strain Paris).